The sequence spans 92 residues: Large ribosomal subunit protein eL37 (92 aa).

Residues Cys-19, Cys-22, Cys-34, and Cys-37 each contribute to the Zn(2+) site. A C4-type zinc finger spans residues 19-37 (CRRCGRRSYHIQKSTCANC). The disordered stretch occupies residues 50 to 92 (SEKAKRRKTTGSGRTAHLRDVHRRFKNGFQVGTPKGARGPENH).

This sequence belongs to the eukaryotic ribosomal protein eL37 family. Zn(2+) is required as a cofactor.

In terms of biological role, binds to the 23S rRNA. The sequence is that of Large ribosomal subunit protein eL37 (rpl37) from Emericella nidulans (strain FGSC A4 / ATCC 38163 / CBS 112.46 / NRRL 194 / M139) (Aspergillus nidulans).